The following is a 119-amino-acid chain: Ribonuclease P protein component (119 aa).

It belongs to the RnpA family. In terms of assembly, consists of a catalytic RNA component (M1 or rnpB) and a protein subunit.

The catalysed reaction is Endonucleolytic cleavage of RNA, removing 5'-extranucleotides from tRNA precursor.. In terms of biological role, RNaseP catalyzes the removal of the 5'-leader sequence from pre-tRNA to produce the mature 5'-terminus. It can also cleave other RNA substrates such as 4.5S RNA. The protein component plays an auxiliary but essential role in vivo by binding to the 5'-leader sequence and broadening the substrate specificity of the ribozyme. The sequence is that of Ribonuclease P protein component from Serratia proteamaculans (strain 568).